A 427-amino-acid chain; its full sequence is Serine hydroxymethyltransferase (427 aa).

(6S)-5,6,7,8-tetrahydrofolate-binding positions include leucine 122 and 126-128; that span reads GHL. Lysine 231 carries the N6-(pyridoxal phosphate)lysine modification. (6S)-5,6,7,8-tetrahydrofolate contacts are provided by residues glutamate 247 and 355 to 357; that span reads SPF.

This sequence belongs to the SHMT family. As to quaternary structure, homodimer. It depends on pyridoxal 5'-phosphate as a cofactor.

The protein resides in the cytoplasm. It catalyses the reaction (6R)-5,10-methylene-5,6,7,8-tetrahydrofolate + glycine + H2O = (6S)-5,6,7,8-tetrahydrofolate + L-serine. It participates in one-carbon metabolism; tetrahydrofolate interconversion. The protein operates within amino-acid biosynthesis; glycine biosynthesis; glycine from L-serine: step 1/1. In terms of biological role, catalyzes the reversible interconversion of serine and glycine with tetrahydrofolate (THF) serving as the one-carbon carrier. This reaction serves as the major source of one-carbon groups required for the biosynthesis of purines, thymidylate, methionine, and other important biomolecules. Also exhibits THF-independent aldolase activity toward beta-hydroxyamino acids, producing glycine and aldehydes, via a retro-aldol mechanism. In Crocosphaera subtropica (strain ATCC 51142 / BH68) (Cyanothece sp. (strain ATCC 51142)), this protein is Serine hydroxymethyltransferase.